The following is a 447-amino-acid chain: tRNA-2-methylthio-N(6)-dimethylallyladenosine synthase (447 aa).

The region spanning K10 to Q128 is the MTTase N-terminal domain. The [4Fe-4S] cluster site is built by C19, C55, C89, C165, C169, and C172. Positions R151 to K382 constitute a Radical SAM core domain. The region spanning K384–E447 is the TRAM domain.

Belongs to the methylthiotransferase family. MiaB subfamily. As to quaternary structure, monomer. The cofactor is [4Fe-4S] cluster.

The protein resides in the cytoplasm. It catalyses the reaction N(6)-dimethylallyladenosine(37) in tRNA + (sulfur carrier)-SH + AH2 + 2 S-adenosyl-L-methionine = 2-methylsulfanyl-N(6)-dimethylallyladenosine(37) in tRNA + (sulfur carrier)-H + 5'-deoxyadenosine + L-methionine + A + S-adenosyl-L-homocysteine + 2 H(+). Functionally, catalyzes the methylthiolation of N6-(dimethylallyl)adenosine (i(6)A), leading to the formation of 2-methylthio-N6-(dimethylallyl)adenosine (ms(2)i(6)A) at position 37 in tRNAs that read codons beginning with uridine. The sequence is that of tRNA-2-methylthio-N(6)-dimethylallyladenosine synthase from Clostridium perfringens (strain ATCC 13124 / DSM 756 / JCM 1290 / NCIMB 6125 / NCTC 8237 / Type A).